A 621-amino-acid chain; its full sequence is MBT domain-containing protein 1 (621 aa).

Over residues 1 to 21 (MEKTKDPADRSSRSERKRRDS) the composition is skewed to basic and acidic residues. The interval 1–55 (MEKTKDPADRSSRSERKRRDSFGMFDGYDSCSEDTSSSSSSDESEEEVAPLPSSL) is disordered. Residues 29 to 41 (DSCSEDTSSSSSS) show a composition bias toward low complexity. An FCS-type zinc finger spans residues 68–103 (PDGKSGMATCEMCGMVGVRDAFYSKTKRFCSVSCSR). Residues Cys77, Cys80, Cys97, and Cys101 each contribute to the Zn(2+) site. MBT repeat units lie at residues 164–268 (FSWG…LVPP), 276–373 (TNWK…IGHR), 374–479 (FKRT…LTPP), and 487–583 (FKWF…LQPP). Residues 581 to 621 (QPPAPQSNKDGQSNVSKQKKKSKSQPYKGHKKNFRKPGNRP) form a disordered region. Basic residues predominate over residues 597 to 621 (KQKKKSKSQPYKGHKKNFRKPGNRP).

As to quaternary structure, monomer. Component of the NuA4 histone acetyltransferase complex.

Its subcellular location is the nucleus. It is found in the chromosome. Chromatin reader component of the NuA4 histone acetyltransferase complex, a multiprotein complex involved in transcriptional activation of select genes principally by acetylation of nucleosomal histones H4 and H2A. The NuA4 complex plays a direct role in repair of DNA double-strand breaks (DSBs) by promoting homologous recombination (HR). MBTD1 specifically recognizes and binds monomethylated and dimethylated 'Lys-20' on histone H4 (H4K20me1 and H4K20me2, respectively). In the NuA4 complex, MBTD1 promotes recruitment of the complex to H4K20me marks by competing with TP53BP1 for binding to H4K20me. Following recruitment to H4K20me at DNA breaks, the NuA4 complex catalyzes acetylation of 'Lys-15' on histone H2A (H2AK15), blocking the ubiquitination mark required for TP53BP1 localization at DNA breaks, thereby promoting homologous recombination (HR). This is MBT domain-containing protein 1 from Xenopus laevis (African clawed frog).